The following is a 255-amino-acid chain: Cobalt-precorrin-6A reductase (255 aa).

It belongs to the precorrin-6x reductase family.

The enzyme catalyses Co-precorrin-6B + NAD(+) = Co-precorrin-6A + NADH + H(+). It functions in the pathway cofactor biosynthesis; adenosylcobalamin biosynthesis; cob(II)yrinate a,c-diamide from sirohydrochlorin (anaerobic route): step 7/10. Functionally, catalyzes the reduction of the macrocycle of cobalt-precorrin-6A to cobalt-precorrin-6B. The protein is Cobalt-precorrin-6A reductase (cbiJ) of Priestia megaterium (Bacillus megaterium).